A 151-amino-acid chain; its full sequence is MLNCQNNASLGLDLGEKTLGIALSQTGIIAQNLKTIFFDTHKYDQLIAPLQKIISQYQIKKIILGYPKHMNNDIGIKAKISNYFKKTLENKFGQVKVILWDERLSTVQAIQILKTNNKKKGKILQMKDEIAASIILQNYLDYIKLHPNKEN.

The protein belongs to the YqgF nuclease family.

It localises to the cytoplasm. Functionally, could be a nuclease involved in processing of the 5'-end of pre-16S rRNA. This chain is Putative pre-16S rRNA nuclease, found in Aster yellows witches'-broom phytoplasma (strain AYWB).